A 315-amino-acid polypeptide reads, in one-letter code: Cobalamin biosynthesis protein CobD (315 aa).

A run of 5 helical transmembrane segments spans residues 48 to 68, 77 to 97, 150 to 170, 200 to 220, and 295 to 315; these read IAGF…TLGI, PILG…AKGL, DGII…AFLY, VFNY…SFIL, and MVSF…EVII.

It belongs to the CobD/CbiB family.

It is found in the cell membrane. It functions in the pathway cofactor biosynthesis; adenosylcobalamin biosynthesis. Converts cobyric acid to cobinamide by the addition of aminopropanol on the F carboxylic group. The protein is Cobalamin biosynthesis protein CobD of Clostridium perfringens (strain 13 / Type A).